Consider the following 827-residue polypeptide: Cytosolic Fe-S cluster assembly factor NAR1 (827 aa).

[4Fe-4S] cluster is bound at residue C22. Residues 57 to 77 are disordered; sequence AYYESSTPPSSSLSAADSRPR. Residues 61–73 are compositionally biased toward low complexity; the sequence is SSTPPSSSLSAAD. Residues C92, C95, and C98 each contribute to the [4Fe-4S] cluster site. Positions 209–231 are disordered; the sequence is RENARKRAKLSNAPADDDDRLHP. Positions 246, 307, 591, and 595 each coordinate [4Fe-4S] cluster. Disordered stretches follow at residues 599 to 637 and 709 to 739; these read GGQI…WAAD and DQGG…NAKS. 2 stretches are compositionally biased toward polar residues: residues 604–621 and 713–738; these read PPTQ…TVDN and ANDS…SNAK.

Belongs to the NARF family.

Its function is as follows. Component of the cytosolic Fe/S protein assembly machinery. Required for maturation of extramitochondrial Fe/S proteins. May play a role in the transfer of pre-assembled Fe/S clusters to target apoproteins. This Mycosarcoma maydis (Corn smut fungus) protein is Cytosolic Fe-S cluster assembly factor NAR1 (NAR1).